The sequence spans 102 residues: Small ribosomal subunit protein uS10 (102 aa).

This sequence belongs to the universal ribosomal protein uS10 family. As to quaternary structure, part of the 30S ribosomal subunit.

Involved in the binding of tRNA to the ribosomes. This is Small ribosomal subunit protein uS10 from Methanobrevibacter smithii (strain ATCC 35061 / DSM 861 / OCM 144 / PS).